The primary structure comprises 67 residues: Large ribosomal subunit protein bL35 (67 aa).

The protein belongs to the bacterial ribosomal protein bL35 family.

This is Large ribosomal subunit protein bL35 from Novosphingobium aromaticivorans (strain ATCC 700278 / DSM 12444 / CCUG 56034 / CIP 105152 / NBRC 16084 / F199).